A 71-amino-acid polypeptide reads, in one-letter code: UPF0435 protein SE_1565 (71 aa).

The protein belongs to the UPF0435 family.

The sequence is that of UPF0435 protein SE_1565 from Staphylococcus epidermidis (strain ATCC 12228 / FDA PCI 1200).